The primary structure comprises 671 residues: DNA ligase (671 aa).

NAD(+) is bound by residues 32–36 (DAEYD), 81–82 (SL), and Glu-113. Lys-115 acts as the N6-AMP-lysine intermediate in catalysis. NAD(+) contacts are provided by Arg-136, Glu-173, Lys-290, and Lys-314. Zn(2+) contacts are provided by Cys-408, Cys-411, Cys-426, and Cys-432. Residues 593–671 (EIDSPFAGKT…EAEMIRLLGA (79 aa)) form the BRCT domain.

The protein belongs to the NAD-dependent DNA ligase family. LigA subfamily. It depends on Mg(2+) as a cofactor. Mn(2+) is required as a cofactor.

It carries out the reaction NAD(+) + (deoxyribonucleotide)n-3'-hydroxyl + 5'-phospho-(deoxyribonucleotide)m = (deoxyribonucleotide)n+m + AMP + beta-nicotinamide D-nucleotide.. Its function is as follows. DNA ligase that catalyzes the formation of phosphodiester linkages between 5'-phosphoryl and 3'-hydroxyl groups in double-stranded DNA using NAD as a coenzyme and as the energy source for the reaction. It is essential for DNA replication and repair of damaged DNA. In Salmonella heidelberg (strain SL476), this protein is DNA ligase.